Here is a 292-residue protein sequence, read N- to C-terminus: GTP cyclohydrolase FolE2 (292 aa).

This sequence belongs to the GTP cyclohydrolase IV family.

It catalyses the reaction GTP + H2O = 7,8-dihydroneopterin 3'-triphosphate + formate + H(+). Its pathway is cofactor biosynthesis; 7,8-dihydroneopterin triphosphate biosynthesis; 7,8-dihydroneopterin triphosphate from GTP: step 1/1. Its function is as follows. Converts GTP to 7,8-dihydroneopterin triphosphate. This is GTP cyclohydrolase FolE2 from Staphylococcus carnosus (strain TM300).